The following is a 135-amino-acid chain: Large ribosomal subunit protein uL16 (135 aa).

It belongs to the universal ribosomal protein uL16 family. Part of the 50S ribosomal subunit.

Its function is as follows. Binds 23S rRNA and is also seen to make contacts with the A and possibly P site tRNAs. This chain is Large ribosomal subunit protein uL16, found in Bdellovibrio bacteriovorus (strain ATCC 15356 / DSM 50701 / NCIMB 9529 / HD100).